A 569-amino-acid polypeptide reads, in one-letter code: MATDIATRELRKPVDVAEYLFRRLHEVGIRSVHGVPGDYNLAALDYLPKCGLHWVGNCNELNAGYAADGYARVNGISALITTFGVGELSAINAIAGAYSEFVPIVHIVGQPHTRSQRDGMLLHHTLGNGDYNVFARMNAGVSTTVGRLNDTHEVATLIDNAIRECWIRSRPVYITLPTDMVTKKIEGERLNTPIDLSLPANDPEKEDYVVDVVLKYLHAAQRPVILVDACAIRHKVLQEVHDLMEASGLPTFVAPMGKGAVDETHKNYGGVYAGDGSNTGVREQVESSDLILSIGAIKSDFNTAGFTYRIGQLNTIDFHSTYVRVRYSEYPDINMKGVLRKVIQKLGRVNAQPVPHLSNNLPDDEPKSGDQPITHRWFWPKIGQWLKENDIVITETGTANFGIWETRFPAGVTAISQVLWGSIGYSVGACQGAALAAKEQGNRRTILFVGDGSIQLTLQEISTMIRNKLNPIIFVICNEGYTIERYIHGWEASYNDIQQWDYKSLPVAFGAGKDYKGYRVKTKDDMIKLFENTEFASAPFLQLVELYMPREDAPSALKLTAEAAASRNK.

Pyruvate is bound by residues Asp38 and His124. Residues Thr398 and 421–423 contribute to the thiamine diphosphate site; that span reads GSI. Asp451 serves as a coordination point for Mg(2+). Thiamine diphosphate contacts are provided by residues 452-453 and 478-483; these read GS and NEGYTI. Asn478 and Gly480 together coordinate Mg(2+). Glu484 lines the pyruvate pocket.

This sequence belongs to the TPP enzyme family. In terms of assembly, homotetramer. Requires Mg(2+) as cofactor. The cofactor is thiamine diphosphate.

The enzyme catalyses a 2-oxocarboxylate + H(+) = an aldehyde + CO2. It carries out the reaction pyruvate + H(+) = acetaldehyde + CO2. The polypeptide is Pyruvate decarboxylase (pdcA) (Aspergillus fumigatus (strain ATCC MYA-4609 / CBS 101355 / FGSC A1100 / Af293) (Neosartorya fumigata)).